The following is a 212-amino-acid chain: ATP-dependent dethiobiotin synthetase BioD (212 aa).

13–18 contributes to the ATP binding site; the sequence is GIGKTV. T17 contributes to the Mg(2+) binding site. K33 is a catalytic residue. Mg(2+) is bound at residue E100. Residues 100–103 and 184–186 each bind ATP; these read EGAG and PHV.

The protein belongs to the dethiobiotin synthetase family. As to quaternary structure, homodimer. Mg(2+) serves as cofactor.

The protein resides in the cytoplasm. It catalyses the reaction (7R,8S)-7,8-diammoniononanoate + CO2 + ATP = (4R,5S)-dethiobiotin + ADP + phosphate + 3 H(+). The protein operates within cofactor biosynthesis; biotin biosynthesis; biotin from 7,8-diaminononanoate: step 1/2. Catalyzes a mechanistically unusual reaction, the ATP-dependent insertion of CO2 between the N7 and N8 nitrogen atoms of 7,8-diaminopelargonic acid (DAPA, also called 7,8-diammoniononanoate) to form a ureido ring. This chain is ATP-dependent dethiobiotin synthetase BioD, found in Nitrobacter hamburgensis (strain DSM 10229 / NCIMB 13809 / X14).